The primary structure comprises 68 residues: Large ribosomal subunit protein bL32 (68 aa).

Residues 1-20 are disordered; sequence MAVQQNKVSKSRRNNRRAHD.

This sequence belongs to the bacterial ribosomal protein bL32 family.

This is Large ribosomal subunit protein bL32 from Ruegeria sp. (strain TM1040) (Silicibacter sp.).